The chain runs to 265 residues: 4-hydroxy-tetrahydrodipicolinate reductase (265 aa).

Residue 9-14 (GPRGRM) participates in NAD(+) binding. Lys37 lines the NADP(+) pocket. Residues 99–101 (GTT) and 125–128 (APNF) each bind NAD(+). The Proton donor/acceptor role is filled by His155. Residue His156 coordinates (S)-2,3,4,5-tetrahydrodipicolinate. Catalysis depends on Lys159, which acts as the Proton donor. 165-166 (GT) is a (S)-2,3,4,5-tetrahydrodipicolinate binding site. A compositionally biased stretch (basic and acidic residues) spans 178–190 (RESQKQGHPKEEE). Residues 178-200 (RESQKQGHPKEEETLPGARGADM) are disordered.

The protein belongs to the DapB family.

Its subcellular location is the cytoplasm. It carries out the reaction (S)-2,3,4,5-tetrahydrodipicolinate + NAD(+) + H2O = (2S,4S)-4-hydroxy-2,3,4,5-tetrahydrodipicolinate + NADH + H(+). The catalysed reaction is (S)-2,3,4,5-tetrahydrodipicolinate + NADP(+) + H2O = (2S,4S)-4-hydroxy-2,3,4,5-tetrahydrodipicolinate + NADPH + H(+). The protein operates within amino-acid biosynthesis; L-lysine biosynthesis via DAP pathway; (S)-tetrahydrodipicolinate from L-aspartate: step 4/4. In terms of biological role, catalyzes the conversion of 4-hydroxy-tetrahydrodipicolinate (HTPA) to tetrahydrodipicolinate. This is 4-hydroxy-tetrahydrodipicolinate reductase from Oceanobacillus iheyensis (strain DSM 14371 / CIP 107618 / JCM 11309 / KCTC 3954 / HTE831).